We begin with the raw amino-acid sequence, 451 residues long: Tubulin gamma-2 chain (451 aa).

Serine 131 bears the Phosphoserine; by BRSK1 mark. 142 to 148 contacts GTP; sequence AGGTGSG.

This sequence belongs to the tubulin family. Component of the gamma-tubulin ring complex (gTuRC) consisting of TUBGCP2, TUBGCP3, TUBGCP4, TUBGCP5 and TUBGCP6 and gamma-tubulin TUBG1 or TUBG2. TUBGCP2, TUBGCP3, TUBGCP4, TUBGCP5 and TUBGCP6 assemble in a 5:5:2:1:1 stoichiometry; each is associated with a gamma-tubulin, thereby arranging 14 gamma-tubulins in a helical manner. Gamma-tubulin at the first position is blocked by TUBGCP3 at the last position, allowing 13 protafilaments to grow into a microtubule. Interacts with alpha-beta tubulin heterodimers; the interaction allows microtubules to nucleate from the gTuRC. Phosphorylation at Ser-131 by BRSK1 regulates centrosome duplication, possibly by mediating relocation of gamma-tubulin and its associated proteins from the cytoplasm to the centrosome.

The protein localises to the cytoplasm. The protein resides in the cytoskeleton. It is found in the microtubule organizing center. Its subcellular location is the centrosome. Functionally, tubulin is the major constituent of microtubules, protein filaments consisting of alpha- and beta-tubulin heterodimers. Gamma-tubulin is a key component of the gamma-tubulin ring complex (gTuRC) which mediates microtubule nucleation. The gTuRC regulates the minus-end nucleation of alpha-beta tubulin heterodimers that grow into microtubule protafilaments, a critical step in centrosome duplication and spindle formation. This Homo sapiens (Human) protein is Tubulin gamma-2 chain (TUBG2).